A 702-amino-acid chain; its full sequence is Zinc finger CCCH domain-containing protein 62 (702 aa).

Residues 1–77 (MAAPAADDDD…SYDDPTFDPA (77 aa)) form a disordered region. Over residues 18–54 (EEDDGEEEEGSEEEVESDDEEEEEGEGYDWSEEDDPE) the composition is skewed to acidic residues. The SAP domain occupies 132 to 166 (LEKLKVYECKAYLRMHKLRLSGNKEVLLTRIRGQI). 4 disordered regions span residues 288 to 349 (EKHA…NTVQ), 405 to 532 (SRTS…QQQP), 546 to 602 (GGTS…RETH), and 634 to 673 (QMSQ…NPQR). The segment covering 298-325 (KTREVRIKDKENERMRRLNRNKENKSKG) has biased composition (basic and acidic residues). Composition is skewed to polar residues over residues 326-349 (QDNM…NTVQ) and 405-419 (SRTS…QAPS). Residues 430-448 (QQQQQQQPPKSIKPAPIQQ) show a composition bias toward low complexity. 4 stretches are compositionally biased toward polar residues: residues 472 to 502 (SQEQ…QHGG), 522 to 532 (QQAVSYTQQQP), 546 to 565 (GGTS…NWGS), and 575 to 591 (PFTQ…NGSG). The C3H1-type zinc-finger motif lies at 674-702 (FRPWKPCFIYQQQGWCPYGENCKFMHDLR).

The polypeptide is Zinc finger CCCH domain-containing protein 62 (Oryza sativa subsp. japonica (Rice)).